The following is a 294-amino-acid chain: Small ribosomal subunit protein uS2 (294 aa).

The tract at residues 232-294 (RATGTTEAPE…SAAGEADAAK (63 aa)) is disordered. The span at 246–259 (EWERELLEGSKSEE) shows a compositional bias: basic and acidic residues. The segment covering 260–294 (AAAPAAAEEAPAAAEEAPAAAEATESAAGEADAAK) has biased composition (low complexity).

This sequence belongs to the universal ribosomal protein uS2 family.

This chain is Small ribosomal subunit protein uS2, found in Arthrobacter sp. (strain FB24).